The chain runs to 595 residues: Trafficking protein particle complex subunit 14 (595 aa).

Disordered stretches follow at residues 84–111 (ASVS…ECVE) and 494–513 (SNPP…SSPA).

In terms of assembly, component of the multisubunit TRAPP II complex, which includes at least TRAPPC1, TRAPPC2, TRAPPC2L, TRAPPC3, TRAPPC4, TRAPPC5, TRAPPC6A/B, TRAPPC9, TRAPPC10 and TRAPPC14. TRAPPC9, TRAPPC10 and TRAPPC14 are specific subunits of the TRAPP II complex. Interacts with alpha-tubulin during mitosis.

The protein localises to the cytoplasm. Its subcellular location is the cytoskeleton. It localises to the spindle. The protein resides in the vesicle. It is found in the midbody. Specific subunit of the TRAPP (transport protein particle) II complex, a highly conserved vesicle tethering complex that functions in late Golgi trafficking as a membrane tether. TRAPP II complex also has GEF activity toward RAB1A. TRAPPC14 is required for ciliogenesis. This chain is Trafficking protein particle complex subunit 14 (trappc14), found in Danio rerio (Zebrafish).